The primary structure comprises 261 residues: UPF0246 protein Rmet_0978 (261 aa).

This sequence belongs to the UPF0246 family.

The polypeptide is UPF0246 protein Rmet_0978 (Cupriavidus metallidurans (strain ATCC 43123 / DSM 2839 / NBRC 102507 / CH34) (Ralstonia metallidurans)).